The following is a 260-amino-acid chain: Proteasome subunit alpha (260 aa).

It belongs to the peptidase T1A family. As to quaternary structure, the 20S proteasome core is composed of 14 alpha and 14 beta subunits that assemble into four stacked heptameric rings, resulting in a barrel-shaped structure. The two inner rings, each composed of seven catalytic beta subunits, are sandwiched by two outer rings, each composed of seven alpha subunits. The catalytic chamber with the active sites is on the inside of the barrel. Has a gated structure, the ends of the cylinder being occluded by the N-termini of the alpha-subunits. Is capped at one or both ends by the proteasome regulatory ATPase, PAN.

It localises to the cytoplasm. The formation of the proteasomal ATPase PAN-20S proteasome complex, via the docking of the C-termini of PAN into the intersubunit pockets in the alpha-rings, triggers opening of the gate for substrate entry. Interconversion between the open-gate and close-gate conformations leads to a dynamic regulation of the 20S proteasome proteolysis activity. Component of the proteasome core, a large protease complex with broad specificity involved in protein degradation. The polypeptide is Proteasome subunit alpha (Thermococcus gammatolerans (strain DSM 15229 / JCM 11827 / EJ3)).